The sequence spans 557 residues: Dihydroxy-acid dehydratase (557 aa).

Asp78 contributes to the Mg(2+) binding site. Cys119 provides a ligand contact to [2Fe-2S] cluster. The Mg(2+) site is built by Asp120 and Lys121. Position 121 is an N6-carboxylysine (Lys121). Cys192 contacts [2Fe-2S] cluster. Residue Glu442 coordinates Mg(2+). Catalysis depends on Ser468, which acts as the Proton acceptor.

It belongs to the IlvD/Edd family. As to quaternary structure, homodimer. [2Fe-2S] cluster is required as a cofactor. Requires Mg(2+) as cofactor.

The catalysed reaction is (2R)-2,3-dihydroxy-3-methylbutanoate = 3-methyl-2-oxobutanoate + H2O. The enzyme catalyses (2R,3R)-2,3-dihydroxy-3-methylpentanoate = (S)-3-methyl-2-oxopentanoate + H2O. Its pathway is amino-acid biosynthesis; L-isoleucine biosynthesis; L-isoleucine from 2-oxobutanoate: step 3/4. The protein operates within amino-acid biosynthesis; L-valine biosynthesis; L-valine from pyruvate: step 3/4. Functions in the biosynthesis of branched-chain amino acids. Catalyzes the dehydration of (2R,3R)-2,3-dihydroxy-3-methylpentanoate (2,3-dihydroxy-3-methylvalerate) into 2-oxo-3-methylpentanoate (2-oxo-3-methylvalerate) and of (2R)-2,3-dihydroxy-3-methylbutanoate (2,3-dihydroxyisovalerate) into 2-oxo-3-methylbutanoate (2-oxoisovalerate), the penultimate precursor to L-isoleucine and L-valine, respectively. The sequence is that of Dihydroxy-acid dehydratase from Bacillus cereus (strain AH187).